The primary structure comprises 156 residues: VapC ribonuclease AF_1683 (156 aa).

The PINc domain maps to 4 to 125 (LIDTGIFFGF…KLISYDSRFS (122 aa)). 2 residues coordinate Mg(2+): D6 and D103.

This sequence belongs to the PINc/VapC protein family. The cofactor is Mg(2+).

Its function is as follows. Toxic component of a type II toxin-antitoxin (TA) system. An RNase. This is VapC ribonuclease AF_1683 from Archaeoglobus fulgidus (strain ATCC 49558 / DSM 4304 / JCM 9628 / NBRC 100126 / VC-16).